The following is a 196-amino-acid chain: Adenylate kinase (196 aa).

10–15 contributes to the ATP binding site; that stretch reads GAGKGT. Residues 30-59 are NMP; that stretch reads STGDMLRAAVSAGTEIGKRAKAVMDAGGLV. AMP contacts are provided by residues Thr31, Arg36, 57 to 59, 85 to 88, and Gln92; these read GLV and GYPR. The segment at 126 to 142 is LID; the sequence is NRVAETIAAGGTVRSDD. Residue Arg127 coordinates ATP. AMP contacts are provided by Arg139 and Arg150. Ala178 contributes to the ATP binding site.

This sequence belongs to the adenylate kinase family. Monomer.

The protein resides in the cytoplasm. It carries out the reaction AMP + ATP = 2 ADP. It functions in the pathway purine metabolism; AMP biosynthesis via salvage pathway; AMP from ADP: step 1/1. Catalyzes the reversible transfer of the terminal phosphate group between ATP and AMP. Plays an important role in cellular energy homeostasis and in adenine nucleotide metabolism. The chain is Adenylate kinase from Agrobacterium fabrum (strain C58 / ATCC 33970) (Agrobacterium tumefaciens (strain C58)).